The following is a 400-amino-acid chain: Nicotinate phosphoribosyltransferase (400 aa).

His-220 is modified (phosphohistidine; by autocatalysis).

It belongs to the NAPRTase family. Post-translationally, transiently phosphorylated on a His residue during the reaction cycle. Phosphorylation strongly increases the affinity for substrates and increases the rate of nicotinate D-ribonucleotide production. Dephosphorylation regenerates the low-affinity form of the enzyme, leading to product release.

It carries out the reaction nicotinate + 5-phospho-alpha-D-ribose 1-diphosphate + ATP + H2O = nicotinate beta-D-ribonucleotide + ADP + phosphate + diphosphate. It functions in the pathway cofactor biosynthesis; NAD(+) biosynthesis; nicotinate D-ribonucleotide from nicotinate: step 1/1. Its function is as follows. Catalyzes the synthesis of beta-nicotinate D-ribonucleotide from nicotinate and 5-phospho-D-ribose 1-phosphate at the expense of ATP. The sequence is that of Nicotinate phosphoribosyltransferase from Enterobacter sp. (strain 638).